A 231-amino-acid chain; its full sequence is MTDPIIIAIDGHSSCGKSTMAKDLARAIGYIYVDTGAMYRAVTLYSIRRGLWKDGVLDTETLRNEMSDVRITFRLNAETGLPETYLNGENVEQDIRSMEVSAKVSPIATLDFVREAMVREQQAMGKSKGIVMDGRDIGTTVFPEAEMKIFVTALPHVRAQRRLDELRAKGDATTTFDDVLANIEERDRIDSTRAVSPLRQAEDALVLDNSHMTIPQQKAWLLERFQEVTGS.

11-19 (GHSSCGKST) is a binding site for ATP.

This sequence belongs to the cytidylate kinase family. Type 1 subfamily.

The protein localises to the cytoplasm. The catalysed reaction is CMP + ATP = CDP + ADP. It carries out the reaction dCMP + ATP = dCDP + ADP. This is Cytidylate kinase from Porphyromonas gingivalis (strain ATCC BAA-308 / W83).